A 173-amino-acid polypeptide reads, in one-letter code: Large ribosomal subunit protein uL10 (173 aa).

The protein belongs to the universal ribosomal protein uL10 family. Part of the ribosomal stalk of the 50S ribosomal subunit. The N-terminus interacts with L11 and the large rRNA to form the base of the stalk. The C-terminus forms an elongated spine to which L12 dimers bind in a sequential fashion forming a multimeric L10(L12)X complex.

Its function is as follows. Forms part of the ribosomal stalk, playing a central role in the interaction of the ribosome with GTP-bound translation factors. The sequence is that of Large ribosomal subunit protein uL10 from Desulfatibacillum aliphaticivorans.